We begin with the raw amino-acid sequence, 181 residues long: MAIATNNSRVYASLQLKNKQDSMYLAIGKTTPWTNEDAPPAPDPTTTTLTEVIGYKKVARVSLCREYLPSDDSKYPVVSYGSRKFTLIPDEDGYKEQAWMVYVEAEITGDELPTGTFRQVGIHTDLVSKASSEKKALLPTDVTDAGILQFFENRQQQNRTSDVILKEKFIITMENKKSVKQ.

This sequence belongs to the tevenvirinae baseplate structural protein gp8 family.

Its subcellular location is the virion. Its function is as follows. Putative baseplate protein. This chain is Virion protein 3, found in Enterococcus faecalis (Streptococcus faecalis).